We begin with the raw amino-acid sequence, 105 residues long: V-type ATP synthase subunit F (105 aa).

Belongs to the V-ATPase F subunit family.

Its function is as follows. Produces ATP from ADP in the presence of a proton gradient across the membrane. The chain is V-type ATP synthase subunit F from Clostridium perfringens (strain 13 / Type A).